Consider the following 635-residue polypeptide: Threonine--tRNA ligase (635 aa).

The region spanning 1–61 (MINISFPDGS…DNDCKLRILT (61 aa)) is the TGS domain. A catalytic region spans residues 242-533 (DHRKLGRELD…LIEEYAGRFP (292 aa)). Zn(2+) contacts are provided by Cys-333, His-384, and His-510.

Belongs to the class-II aminoacyl-tRNA synthetase family. In terms of assembly, homodimer. Zn(2+) serves as cofactor.

It localises to the cytoplasm. The catalysed reaction is tRNA(Thr) + L-threonine + ATP = L-threonyl-tRNA(Thr) + AMP + diphosphate + H(+). Catalyzes the attachment of threonine to tRNA(Thr) in a two-step reaction: L-threonine is first activated by ATP to form Thr-AMP and then transferred to the acceptor end of tRNA(Thr). Also edits incorrectly charged L-seryl-tRNA(Thr). The polypeptide is Threonine--tRNA ligase (Rickettsia peacockii (strain Rustic)).